Consider the following 170-residue polypeptide: Adenine phosphoribosyltransferase (170 aa).

The protein belongs to the purine/pyrimidine phosphoribosyltransferase family. Homodimer.

It localises to the cytoplasm. It carries out the reaction AMP + diphosphate = 5-phospho-alpha-D-ribose 1-diphosphate + adenine. The protein operates within purine metabolism; AMP biosynthesis via salvage pathway; AMP from adenine: step 1/1. Catalyzes a salvage reaction resulting in the formation of AMP, that is energically less costly than de novo synthesis. The sequence is that of Adenine phosphoribosyltransferase from Prochlorococcus marinus (strain MIT 9312).